A 122-amino-acid polypeptide reads, in one-letter code: Protein NIM1-INTERACTING 2 (122 aa).

Residues 1–22 (MNNSLKKEERVEEDNGKSDGNR) are compositionally biased toward basic and acidic residues. The tract at residues 1–28 (MNNSLKKEERVEEDNGKSDGNRGKPSTE) is disordered. The involved in NPR1/NIM1 interaction stretch occupies residues 39 to 45 (DEFFKIL). Residues 70–74 (KKRKR) carry the Nuclear localization signal motif.

In terms of assembly, interacts with NPR1 N-terminal region.

The protein localises to the nucleus. The polypeptide is Protein NIM1-INTERACTING 2 (Arabidopsis thaliana (Mouse-ear cress)).